Reading from the N-terminus, the 291-residue chain is Transmembrane O-methyltransferase (291 aa).

The chain crosses the membrane as a helical span at residues 31 to 51 (VGTMSPAIALAFLPLVVTLLV). Residues E137, 139 to 140 (GT), S145, E163, and S193 each bind S-adenosyl-L-methionine.

It belongs to the class I-like SAM-binding methyltransferase superfamily. Cation-dependent O-methyltransferase family. In terms of assembly, interacts with LHFPL5, PCDH15, TMC1, TMC2 and TMIE. Interacts directly with TMC1. The interaction of TOMT with TMC1 and TMC2 is required for the transportation of TMC1/2 into the stereocilia of hair cells.

The protein localises to the membrane. The protein resides in the cytoplasm. It is found in the endoplasmic reticulum. It carries out the reaction a catechol + S-adenosyl-L-methionine = a guaiacol + S-adenosyl-L-homocysteine + H(+). Functionally, catalyzes the O-methylation, and thereby the inactivation, of catecholamine neurotransmitters and catechol hormones. Required for auditory function. Component of the cochlear hair cell's mechanotransduction (MET) machinery. Involved in the assembly of the asymmetric tip-link MET complex. Required for transportation of TMC1 and TMC2 proteins into the mechanically sensitive stereocilia of the hair cells. The function in MET is independent of the enzymatic activity. The protein is Transmembrane O-methyltransferase of Pan troglodytes (Chimpanzee).